A 397-amino-acid polypeptide reads, in one-letter code: Cell division protein DivIB (397 aa).

Over 1–138 the chain is Cytoplasmic; sequence MTTKDKGDQK…RIERIHLYRA (138 aa). The segment covering 24–37 has biased composition (basic and acidic residues); that stretch reads QEYLEKKSQEKASE. A disordered region spans residues 24-115; sequence QEYLEKKSQE…DRTEKFIGQA (92 aa). Residues 74-103 show a composition bias toward acidic residues; sequence ASDDDETNESEESEDVEEPEEENIEESSDV. Residues 139–159 form a helical membrane-spanning segment; the sequence is LPVLVISSLLILLSLYFITPL. The region spanning 160 to 231 is the POTRA domain; sequence GSLKNLVVTG…ITFKIQVTEY (72 aa). Topologically, residues 160–397 are extracellular; it reads GSLKNLVVTG…PSDVTDETNN (238 aa). A disordered region spans residues 360 to 397; sequence LVQKEEQDQEQEKEESSEETVPGETEAAPSDVTDETNN. Positions 366–377 are enriched in acidic residues; that stretch reads QDQEQEKEESSE.

It belongs to the FtsQ/DivIB family. DivIB subfamily.

It is found in the cell membrane. Functionally, cell division protein that may be involved in stabilizing or promoting the assembly of the division complex. The chain is Cell division protein DivIB from Streptococcus gordonii (strain Challis / ATCC 35105 / BCRC 15272 / CH1 / DL1 / V288).